Reading from the N-terminus, the 772-residue chain is Semaphorin-3A (772 aa).

An N-terminal signal peptide occupies residues 1–22; it reads MGWLRGIALLSLGVLLAGRVNC. The Sema domain occupies 31–514; the sequence is RLKLSYKEML…SATGVSQLPL (484 aa). A glycan (N-linked (GlcNAc...) asparagine) is linked at asparagine 53. Cysteine 103 and cysteine 114 are disulfide-bonded. Asparagine 125 is a glycosylation site (N-linked (GlcNAc...) asparagine). Intrachain disulfides connect cysteine 132/cysteine 141, cysteine 269/cysteine 381, cysteine 293/cysteine 341, and cysteine 517/cysteine 535. Positions 576–665 constitute an Ig-like C2-type domain; the sequence is PSGQTLEEKI…GFIQTLLKVT (90 aa). Asparagine 591 carries N-linked (GlcNAc...) asparagine glycosylation. A disulfide bond links cysteine 650 and cysteine 723. Positions 730–772 are disordered; that stretch reads DRKQRRQRPANAQVNTNKWKHLQENKKGRNRRTHEFERAPRSV. The span at 750–772 shows a compositional bias: basic and acidic residues; that stretch reads HLQENKKGRNRRTHEFERAPRSV.

Belongs to the semaphorin family. As to expression, expressed at relatively high levels in brain and muscle, moderate levels in lung, bursa, and heart and virtually absent in liver. Collapsin-1, -2, -3, and -5 bind to overlapping but distinct axon tracts.

The protein localises to the secreted. In terms of biological role, induces the collapse and paralysis of neuronal growth cones. Could serve as a ligand that guides specific growth cones by a motility-inhibiting mechanism. Binds to neuropilin. The protein is Semaphorin-3A (SEMA3A) of Gallus gallus (Chicken).